The chain runs to 142 residues: Hemoglobin subunit alpha (142 aa).

Ser-1 carries the post-translational modification N-acetylserine. In terms of domain architecture, Globin spans 1–142 (SLTDKDKATV…VSLALSERYR (142 aa)). His-59 provides a ligand contact to O2. Residue His-88 participates in heme b binding.

It belongs to the globin family. In terms of assembly, hb1 is a heterotetramer of two alpha chains and two beta-1 chains. Hb2 is a heterotetramer of two alpha chains and two beta-2 chains. In terms of tissue distribution, red blood cells.

Involved in oxygen transport from gills to the various peripheral tissues. This is Hemoglobin subunit alpha (hba) from Pseudaphritis urvillii (Congolli).